A 122-amino-acid polypeptide reads, in one-letter code: Large ribosomal subunit protein uL14 (122 aa).

This sequence belongs to the universal ribosomal protein uL14 family. As to quaternary structure, part of the 50S ribosomal subunit. Forms a cluster with proteins L3 and L19. In the 70S ribosome, L14 and L19 interact and together make contacts with the 16S rRNA in bridges B5 and B8.

Its function is as follows. Binds to 23S rRNA. Forms part of two intersubunit bridges in the 70S ribosome. This is Large ribosomal subunit protein uL14 from Mesorhizobium japonicum (strain LMG 29417 / CECT 9101 / MAFF 303099) (Mesorhizobium loti (strain MAFF 303099)).